The chain runs to 696 residues: Interleukin-1 receptor accessory protein-like 1 (696 aa).

The first 18 residues, 1-18 (MKAPIPHLILLYATFTQS), serve as a signal peptide directing secretion. In terms of domain architecture, Ig-like C2-type 1 spans 19–134 (LKVVTKRGSA…YCMKVSISLT (116 aa)). The Extracellular segment spans residues 19–357 (LKVVTKRGSA…LLHKRELMYT (339 aa)). Intrachain disulfides connect C31–C126 and C53–C118. Residues N63, N122, and N138 are each glycosylated (N-linked (GlcNAc...) asparagine). 2 disulfides stabilise this stretch: C143–C185 and C164–C216. Ig-like C2-type domains follow at residues 143–232 (CYNS…TELT) and 242–350 (PKLL…VLLH). 3 N-linked (GlcNAc...) asparagine glycosylation sites follow: N213, N264, and N331. C267 and C334 are joined by a disulfide. A helical transmembrane segment spans residues 358 to 378 (VELAGGLGAILLLLVCLVTIY). Residues 379-696 (KCYKIEIMLF…RETSISSVIW (318 aa)) lie on the Cytoplasmic side of the membrane. The region spanning 403-559 (KDYDAYLSYT…KFWKRLQYEM (157 aa)) is the TIR domain. E491 is an active-site residue. The interaction with NCS1 stretch occupies residues 549 to 644 (SKFWKRLQYE…TGTLPLTSIG (96 aa)). The segment at 659–680 (GQRPQTKSSREQNPDEAHTNSA) is disordered. A compositionally biased stretch (basic and acidic residues) spans 666–676 (SSREQNPDEAH).

Belongs to the interleukin-1 receptor family. As to quaternary structure, homodimer. Interacts (calcium-independent) with NCS1. Interacts (via the first immunoglobilin domain) with PTPRD (via the second immunoglobilin domain); this interaction is PTPRD-splicing-dependent and induces pre- and post-synaptic differentiation of neurons and is required for IL1RAPL1-mediated synapse formation. As to expression, detected at low levels in heart, skeletal muscle, ovary, skin, amygdala, caudate nucleus, corpus callosum, hippocampus, substantia nigra and thalamus. Detected at very low levels in tonsil, prostate, testis, small intestine, placenta, colon and fetal liver.

The protein resides in the cell membrane. The protein localises to the cytoplasm. It is found in the cell projection. It localises to the axon. Its subcellular location is the dendrite. The enzyme catalyses NAD(+) + H2O = ADP-D-ribose + nicotinamide + H(+). Its function is as follows. May regulate secretion and presynaptic differentiation through inhibition of the activity of N-type voltage-gated calcium channel. May activate the MAP kinase JNK. Plays a role in neurite outgrowth. During dendritic spine formation can bidirectionally induce pre- and post-synaptic differentiation of neurons by trans-synaptically binding to PTPRD. This is Interleukin-1 receptor accessory protein-like 1 (IL1RAPL1) from Homo sapiens (Human).